The chain runs to 460 residues: ATP synthase subunit beta (460 aa).

148 to 155 provides a ligand contact to ATP; it reads GGAGVGKT.

This sequence belongs to the ATPase alpha/beta chains family. As to quaternary structure, F-type ATPases have 2 components, CF(1) - the catalytic core - and CF(0) - the membrane proton channel. CF(1) has five subunits: alpha(3), beta(3), gamma(1), delta(1), epsilon(1). CF(0) has three main subunits: a(1), b(2) and c(9-12). The alpha and beta chains form an alternating ring which encloses part of the gamma chain. CF(1) is attached to CF(0) by a central stalk formed by the gamma and epsilon chains, while a peripheral stalk is formed by the delta and b chains.

The protein localises to the cell inner membrane. It carries out the reaction ATP + H2O + 4 H(+)(in) = ADP + phosphate + 5 H(+)(out). Its function is as follows. Produces ATP from ADP in the presence of a proton gradient across the membrane. The catalytic sites are hosted primarily by the beta subunits. This is ATP synthase subunit beta from Alcanivorax borkumensis (strain ATCC 700651 / DSM 11573 / NCIMB 13689 / SK2).